Consider the following 272-residue polypeptide: NH(3)-dependent NAD(+) synthetase (272 aa).

ATP is bound at residue 45 to 52 (GISGGQDS). Aspartate 51 is a binding site for Mg(2+). Arginine 138 contributes to the deamido-NAD(+) binding site. Threonine 158 contacts ATP. Glutamate 163 provides a ligand contact to Mg(2+). Deamido-NAD(+)-binding residues include lysine 171 and aspartate 178. ATP-binding residues include lysine 187 and threonine 209. 258-259 (HK) is a binding site for deamido-NAD(+).

The protein belongs to the NAD synthetase family. As to quaternary structure, homodimer.

It carries out the reaction deamido-NAD(+) + NH4(+) + ATP = AMP + diphosphate + NAD(+) + H(+). It functions in the pathway cofactor biosynthesis; NAD(+) biosynthesis; NAD(+) from deamido-NAD(+) (ammonia route): step 1/1. In terms of biological role, catalyzes the ATP-dependent amidation of deamido-NAD to form NAD. Uses ammonia as a nitrogen source. This chain is NH(3)-dependent NAD(+) synthetase, found in Bacillus cereus (strain AH187).